The primary structure comprises 657 residues: MAKETFYITTPIYYPSGNLHIGHAYSTVAGDVIARYKRMQGYDVRYLTGTDEHGQKIQEKAQKAGKTEIEYLDEMIAGIKQLWAKLEISNDDFIRTTEERHKHVVEQVFERLLKQGDIYLGEYEGWYSVPDETYYTESQLVDPQYENGKIIGGKSPDSGHEVELVKEESYFFNISKYTDRLLEFYDQNPDFIQPPSRKNEMINNFIKPGLADLAVSRTSFNWGVHVPSNPKHVVYVWIDALVNYISALGYLSDDESLFNKYWPADIHLMAKEIVRFHSIIWPILLMALDLPLPKKVFAHGWILMKDGKMSKSKGNVVDPNILIDRYGLDATRYYLMRELPFGSDGVFTPEAFVERTNFDLANDLGNLVNRTISMVNKYFDGELPAYQGPLHELDEEMEAMALETVKSYTESMESLQFSVALSTVWKFISRTNKYIDETTPWVLAKDDSQKDMLGNVMAHLVENIRYAAVLLRPFLTHAPKEIFEQLNINNPQFMEFSSLEQYGVLTESIMVTGQPKPIFPRLDSEAEIAYIKESMQPPATEEEKEEIPSKPQIDIKDFDKVEIKAATIINAEHVKKSDKLLKIQVDLDSEQRQIVSGIAKFYTPDDIIGKKVAVVTNLKPAKLMGQKSEGMILSAEKDGVLTLVSLPSAIPNGAVIK.

Positions 13–23 (YYPSGNLHIGH) match the 'HIGH' region motif. Residues 308 to 312 (KMSKS) carry the 'KMSKS' region motif. Position 311 (K311) interacts with ATP. The tRNA-binding domain maps to 557–657 (DFDKVEIKAA…SAIPNGAVIK (101 aa)).

This sequence belongs to the class-I aminoacyl-tRNA synthetase family. MetG type 2B subfamily. Homodimer.

The protein localises to the cytoplasm. It catalyses the reaction tRNA(Met) + L-methionine + ATP = L-methionyl-tRNA(Met) + AMP + diphosphate. In terms of biological role, is required not only for elongation of protein synthesis but also for the initiation of all mRNA translation through initiator tRNA(fMet) aminoacylation. The sequence is that of Methionine--tRNA ligase from Staphylococcus aureus (strain MW2).